A 148-amino-acid chain; its full sequence is UPF0179 protein Mpal_0949 (148 aa).

This sequence belongs to the UPF0179 family.

The chain is UPF0179 protein Mpal_0949 from Methanosphaerula palustris (strain ATCC BAA-1556 / DSM 19958 / E1-9c).